The sequence spans 636 residues: uncharacterized protein (636 aa).

Disordered stretches follow at residues 1–22 (MYNV…NEIG) and 81–107 (SSQT…PQNN). Topologically, residues 1 to 170 (MYNVRGDLNR…YFVGGEGLMQ (170 aa)) are cytoplasmic. A helical; Signal-anchor for type II membrane protein transmembrane segment spans residues 171-191 (LLFLLFLAAGTGMLFIGLPIL). Residues 192–636 (TYTGHNSLAS…RPKNSLMDGC (445 aa)) are Lumenal-facing. Residues 218–587 (LRYGSLIDPD…YVRIYQDSSD (370 aa)) form the GH16 domain. 6 N-linked (GlcNAc...) asparagine glycosylation sites follow: N291, N378, N429, N464, N489, and N616.

This sequence belongs to the SKN1/KRE6 family.

Its subcellular location is the endoplasmic reticulum membrane. Functionally, required for synthesis of the major beta-glucans of the yeast cell wall. This is an uncharacterized protein from Schizosaccharomyces pombe (strain 972 / ATCC 24843) (Fission yeast).